Consider the following 291-residue polypeptide: D-alanyl-D-alanine carboxypeptidase DacB2 (291 aa).

The N-terminal stretch at methionine 1–alanine 22 is a signal peptide. Catalysis depends on serine 69, which acts as the Acyl-ester intermediate. Lysine 72 serves as the catalytic Proton acceptor. The active site involves serine 124.

It belongs to the peptidase S11 family.

The protein resides in the periplasm. The protein operates within cell wall biogenesis; peptidoglycan biosynthesis. With respect to regulation, inhibited by the beta-lactam antibiotic meropenem. Inhibited by the non-specific inhibitor phenylmethylsulfonyl fluoride (PMSF). Functionally, probably cleaves the terminal D-Ala-D-Ala dipeptide of the peptidoglycan stem peptide. Shows significant D,D-carboxypeptidase activity in vitro. Acts on the synthetic penta-peptide substrate Penta-DAP (L-Ala-gamma-D-Gln-DAP-D-Ala-D-Ala). Also shows weak activity on Penta-Lys (L-Ala-gamma-Glu-L-Lys-D-Ala-D-Ala). The catalytic domain binds weakly to peptidoglycan in vitro. Plays an important role in the maintenance of colony morphology and cell wall permeability and integrity. The sequence is that of D-alanyl-D-alanine carboxypeptidase DacB2 from Mycobacterium tuberculosis (strain ATCC 25618 / H37Rv).